The primary structure comprises 474 residues: Aspartate ammonia-lyase (474 aa).

L-aspartate contacts are provided by Thr105, Ser144, Thr145, Asn146, and Thr191. Residues 322 to 331 (GSSIMPGKVN) are SS loop. Ser323 acts as the Proton acceptor in catalysis. The L-aspartate site is built by Ser324 and Lys329.

Belongs to the class-II fumarase/aspartase family. Aspartase subfamily. Homotetramer.

The catalysed reaction is L-aspartate = fumarate + NH4(+). Lyase involved in the degradation of canavanine, the delta-oxa-analog of arginine, allowing growth on canavanine as sole nitrogen and carbon source. Probably catalyzes the conversion of L-aspartate to fumarate and ammonia. The polypeptide is Aspartate ammonia-lyase (Pseudomonas canavaninivorans).